The primary structure comprises 399 residues: Yellow-related salivary protein LJM11 (399 aa).

The N-terminal stretch at 1-18 (MKVFFSIFTLVLFQGTLG) is a signal peptide. Cys115 and Cys186 form a disulfide bridge. N-linked (GlcNAc...) asparagine glycosylation is present at Asn213. An intrachain disulfide couples Cys319 to Cys395. Residues Thr345, Asn360, and Phe362 each coordinate serotonin.

The protein belongs to the major royal jelly protein family. As to expression, salivary gland (at protein level).

It is found in the secreted. In terms of biological role, probably modulates blood feeding of sand flies on vertebrate species by binding and sequestering different mediators involved in the host response. Binds biogenic amines. Binds serotonin with high affinity. Binds adrenaline and noradrenaline. Binds dopamine and octopamine. Poorly binds histamine. Induces a delayed type hypersensitivity response in host tissues. Induces systemic Th1 immune response in the host. Immunogenic; elicits antibody production in the host. Functions as a chemoattractant for host neutrophils; likely acts through a G-protein-coupled receptor and effect is dependent on calcium influx. Its function is as follows. (Microbial infection) Modulates infection caused by Leishmania species in the host. This Lutzomyia longipalpis (Sand fly) protein is Yellow-related salivary protein LJM11.